A 486-amino-acid polypeptide reads, in one-letter code: UDP-N-acetylmuramate--L-alanine ligase (486 aa).

126–132 is an ATP binding site; the sequence is GTHGKTS.

Belongs to the MurCDEF family.

It localises to the cytoplasm. The catalysed reaction is UDP-N-acetyl-alpha-D-muramate + L-alanine + ATP = UDP-N-acetyl-alpha-D-muramoyl-L-alanine + ADP + phosphate + H(+). Its pathway is cell wall biogenesis; peptidoglycan biosynthesis. Functionally, cell wall formation. The polypeptide is UDP-N-acetylmuramate--L-alanine ligase (Corynebacterium glutamicum (strain ATCC 13032 / DSM 20300 / JCM 1318 / BCRC 11384 / CCUG 27702 / LMG 3730 / NBRC 12168 / NCIMB 10025 / NRRL B-2784 / 534)).